Reading from the N-terminus, the 33-residue chain is Beta-theraphotoxin-Cm1b (33 aa).

3 disulfide bridges follow: C2–C17, C9–C22, and C16–C29. A Leucine amide modification is found at L33.

It belongs to the neurotoxin 10 (Hwtx-1) family. 04 (CcoTx1) subfamily. In terms of tissue distribution, expressed by the venom gland.

The protein resides in the secreted. Functionally, inhibits several voltage-gated sodium channels and only one voltage-gated calcium channel (Cav2.2/CACNA1B (IC(50)=1.1 uM) and Nav1.2/SCN2A (IC(50)=3.7-80 nM), Nav1.3/SCN3A (IC(50)=88-5570 nM), Nav1.1/SCN1A (IC(50)=170-407 nM), Nav1.7/SCN9A (IC(50)=95.5-230 nM), Nav1.6/SCN6A (IC(50)=49.9-3990 nM), Nav1.4/SCN4A (IC(50)=113-400 nM or &gt;10 uM), Nav1.5/SCN5A (IC(50)=1524-1634 nM or &gt;10 uM)). The toxin acts by shifting the voltage dependence of channel activation to more depolarized potentials and by blocking the inward component of the sodium current. It shows moderate affinity for lipid bilayers without cholesterol and high affinity for lipid bilayers containing cholesterol. In vivo, this toxin causes general ataxia, lack of response to stimuli, and semiparalysis. After a few minutes, the mice are unable to stand, and breathing is reduced in rhythm and intensity. Symptoms gradually increase with progressive slowing of breathing and flaccid paralysis; death occurred within 10 to 20 minutes post injection. Animals remain totally flaccid, and no symptoms of excitatory neurotoxicity are observed. This chain is Beta-theraphotoxin-Cm1b, found in Ceratogyrus marshalli (Straighthorned baboon tarantula).